The chain runs to 334 residues: Glyceraldehyde-3-phosphate dehydrogenase (334 aa).

NAD(+) contacts are provided by residues 12–13 (RI), D35, R79, and S121. D-glyceraldehyde 3-phosphate is bound by residues 152-154 (SCT), T183, R198, 211-212 (TG), and R234. C153 acts as the Nucleophile in catalysis. N315 provides a ligand contact to NAD(+).

This sequence belongs to the glyceraldehyde-3-phosphate dehydrogenase family. Homotetramer.

It is found in the cytoplasm. The enzyme catalyses D-glyceraldehyde 3-phosphate + phosphate + NAD(+) = (2R)-3-phospho-glyceroyl phosphate + NADH + H(+). It functions in the pathway carbohydrate degradation; glycolysis; pyruvate from D-glyceraldehyde 3-phosphate: step 1/5. Its function is as follows. Catalyzes the oxidative phosphorylation of glyceraldehyde 3-phosphate (G3P) to 1,3-bisphosphoglycerate (BPG) using the cofactor NAD. The first reaction step involves the formation of a hemiacetal intermediate between G3P and a cysteine residue, and this hemiacetal intermediate is then oxidized to a thioester, with concomitant reduction of NAD to NADH. The reduced NADH is then exchanged with the second NAD, and the thioester is attacked by a nucleophilic inorganic phosphate to produce BPG. In Corynebacterium glutamicum (strain ATCC 13032 / DSM 20300 / JCM 1318 / BCRC 11384 / CCUG 27702 / LMG 3730 / NBRC 12168 / NCIMB 10025 / NRRL B-2784 / 534), this protein is Glyceraldehyde-3-phosphate dehydrogenase (gap).